Consider the following 404-residue polypeptide: Probable tRNA sulfurtransferase (404 aa).

One can recognise a THUMP domain in the interval 60–165 (QPVVEALKLV…DEAAYISYEE (106 aa)). Residues 183–184 (ML), 208–209 (HF), Arg-265, Gly-287, and Gln-296 contribute to the ATP site.

This sequence belongs to the ThiI family.

It localises to the cytoplasm. The enzyme catalyses [ThiI sulfur-carrier protein]-S-sulfanyl-L-cysteine + a uridine in tRNA + 2 reduced [2Fe-2S]-[ferredoxin] + ATP + H(+) = [ThiI sulfur-carrier protein]-L-cysteine + a 4-thiouridine in tRNA + 2 oxidized [2Fe-2S]-[ferredoxin] + AMP + diphosphate. The catalysed reaction is [ThiS sulfur-carrier protein]-C-terminal Gly-Gly-AMP + S-sulfanyl-L-cysteinyl-[cysteine desulfurase] + AH2 = [ThiS sulfur-carrier protein]-C-terminal-Gly-aminoethanethioate + L-cysteinyl-[cysteine desulfurase] + A + AMP + 2 H(+). It functions in the pathway cofactor biosynthesis; thiamine diphosphate biosynthesis. In terms of biological role, catalyzes the ATP-dependent transfer of a sulfur to tRNA to produce 4-thiouridine in position 8 of tRNAs, which functions as a near-UV photosensor. Also catalyzes the transfer of sulfur to the sulfur carrier protein ThiS, forming ThiS-thiocarboxylate. This is a step in the synthesis of thiazole, in the thiamine biosynthesis pathway. The sulfur is donated as persulfide by IscS. This Streptococcus pyogenes serotype M6 (strain ATCC BAA-946 / MGAS10394) protein is Probable tRNA sulfurtransferase.